Here is a 142-residue protein sequence, read N- to C-terminus: MRTEVAKKETVNHQWFVVDAENVVLGRLATQVANVLRGKHKPMYTPSVDTGDFVVIVNAEKIALTGNKMADKVYYSHSGFPGGIKSSTAAAMLSKKPEELIRKAVKGMLPKNKLARHMLKKLKVYSGGAHPHEAQQPAQLSL.

Belongs to the universal ribosomal protein uL13 family. Part of the 50S ribosomal subunit.

This protein is one of the early assembly proteins of the 50S ribosomal subunit, although it is not seen to bind rRNA by itself. It is important during the early stages of 50S assembly. The protein is Large ribosomal subunit protein uL13 of Trichlorobacter lovleyi (strain ATCC BAA-1151 / DSM 17278 / SZ) (Geobacter lovleyi).